Reading from the N-terminus, the 180-residue chain is Adenine phosphoribosyltransferase (180 aa).

Belongs to the purine/pyrimidine phosphoribosyltransferase family. In terms of assembly, homodimer.

It localises to the cytoplasm. It carries out the reaction AMP + diphosphate = 5-phospho-alpha-D-ribose 1-diphosphate + adenine. Its pathway is purine metabolism; AMP biosynthesis via salvage pathway; AMP from adenine: step 1/1. Catalyzes a salvage reaction resulting in the formation of AMP, that is energically less costly than de novo synthesis. The protein is Adenine phosphoribosyltransferase of Rhizobium meliloti (strain 1021) (Ensifer meliloti).